Consider the following 89-residue polypeptide: Dynein light chain 1, cytoplasmic (89 aa).

It belongs to the dynein light chain family. In terms of assembly, interacts with mett-10; the interaction is direct, and is required for the nuclear localization of mett-10. Component of a dynein-regulating complex composed of at least bicd-1, dlc-1 and egal-1. Interacts with egal-1 and unc-83. Interacts with fbf-2. In terms of tissue distribution, broadly expressed in tissues including the intestine, body wall muscles, germs cells, oocytes, the rectal valve and cells in the head.

Its subcellular location is the cytoplasm. It is found in the cytoskeleton. The protein localises to the nucleus envelope. The protein resides in the cytoplasmic granule. Functionally, acts as a non-catalytic accessory component of a dynein complex. Part of a complex with bicd-1 and egal-1, which is recruited to the nuclear envelope by unc-83, where in turn, it recruits dynein to the nuclear surface and regulates nuclear migrations in hypodermal precursor cells. Probably within a dynein motor complex, plays a role in the cell fate specification of the germline and oogenesis. In particular, it inhibits germ cell proliferation. Regulates the function and localization of the RNA-binding protein fbf-2 in the germline. Plays a role in mitotic and meiotic processes. Involved in the pairing of homologous chromosomes. Independently of its dynein-mediated functions, plays a role in germ cell apoptosis. This is Dynein light chain 1, cytoplasmic from Caenorhabditis elegans.